Consider the following 344-residue polypeptide: Acireductone dioxygenase (344 aa).

His92, His94, Glu98, and His137 together coordinate Fe(2+). Ni(2+)-binding residues include His92, His94, Glu98, and His137.

Belongs to the acireductone dioxygenase (ARD) family. Fe(2+) serves as cofactor. It depends on Ni(2+) as a cofactor.

It localises to the cytoplasm. It is found in the nucleus. It catalyses the reaction 1,2-dihydroxy-5-(methylsulfanyl)pent-1-en-3-one + O2 = 4-methylsulfanyl-2-oxobutanoate + formate + 2 H(+). The catalysed reaction is 1,2-dihydroxy-5-(methylsulfanyl)pent-1-en-3-one + O2 = 3-(methylsulfanyl)propanoate + CO + formate + 2 H(+). It participates in amino-acid biosynthesis; L-methionine biosynthesis via salvage pathway; L-methionine from S-methyl-5-thio-alpha-D-ribose 1-phosphate: step 5/6. In terms of biological role, catalyzes 2 different reactions between oxygen and the acireductone 1,2-dihydroxy-3-keto-5-methylthiopentene (DHK-MTPene) depending upon the metal bound in the active site. Fe-containing acireductone dioxygenase (Fe-ARD) produces formate and 2-keto-4-methylthiobutyrate (KMTB), the alpha-ketoacid precursor of methionine in the methionine recycle pathway. Ni-containing acireductone dioxygenase (Ni-ARD) produces methylthiopropionate, carbon monoxide and formate, and does not lie on the methionine recycle pathway. This is Acireductone dioxygenase from Leishmania infantum.